Consider the following 282-residue polypeptide: MPGVTSERTASRFDAIPGPLGLASASLEGKVALVTGAGRGIGREMAMELGRRGAKVIVNYANSSESAQEVVNAIKKSGSDAVAIKANVSDVDQIVSLFDQAVKVWGKLHIVCSNSGVVSFGHVKDVTPEEFDRVFTINTRGQFFVAREAYKHLEVGGRLILMGSITGQAKGVPKHAVYSGSKGAIETFVRCMAVDFGDKKITVNAVAPGGIKTDMYHAVCREYIPGGTELDDEAVDEYASTWSPLGRVGLPIDIARCVCFLASQDGEWVNGKVLGIDGHAMM.

Residues Ile-41, Asn-114, and Arg-147 each coordinate NADP(+). Residues Ser-164 and Tyr-178 each act as proton donor in the active site. NADP(+) is bound by residues Tyr-178, Lys-182, Ile-211, and Thr-213. Lys-182 functions as the Lowers pKa of active site Tyr in the catalytic mechanism.

The protein belongs to the short-chain dehydrogenases/reductases (SDR) family.

The protein operates within pigment biosynthesis; melanin biosynthesis. Its function is as follows. Trihydroxynaphthalene reductase involved the biosynthesis of dihydroxynaphthalene (DHN)-melanin, a bluish-green pigment forming a dark layer in the conidial wall that protects the conidia from UV radiations. The first step of the pathway is the production of the pentaketide 1,3,6,8-tetrahydroxynaphthalene (1,3,6,8-THN or T4HN) by the polyketide synthase PfmaE though condensation of acetyl-CoA with malonyl-CoA. T4HN is not stable and easily oxidizes into the stable form flaviolin. T4HN is also substrate of the hydroxynaphthalene reductase PfmaG to yield scytalone. The scytalone dehydratase PfmaJ then reduces scytalone to 1,3,8-THN. 1,3,8-THN is then substrate of the hydroxynaphthalene reductase PfmaI to yield vermelone. Vermelone is further converted by the multicopper oxidase PfmaD to 1,8-DHN. Finally the laccase PFICI_06862 transforms 1,8-DHN to DHN-melanin. The roles of the 5-oxoprolinase PfmaA and the proline iminopeptidase PfmaB within the cluster have not been elucidated yet. In Pestalotiopsis fici (strain W106-1 / CGMCC3.15140), this protein is Trihydroxynaphthalene reductase PfmaI.